Here is a 232-residue protein sequence, read N- to C-terminus: MTNYREIAWQGLWKNNPGLVQLLGLCPLLAVTATLTNALGLGVATMLVLIGSNILVSLVRDYVPKEIRIPVFVMIIAALVTAVQLLINAYAYGLYLSLGIFLPLIVTNCIIIGRAEAFASRNNAFSAAFDGLMMGLGFTLVLAVLGATREILGQGTLFDGADQLLGPWAKALTIQVWQVDTPFLLAMLPPGAFIVMGLLIALKNVIDKKLKERQPEVAVQPSVTRARITKVS.

Helical transmembrane passes span 18-38, 39-59, 69-89, 93-113, 127-147, and 182-202; these read GLVQLLGLCPLLAVTATLTNA, LGLGVATMLVLIGSNILVSLV, IPVFVMIIAALVTAVQLLINA, GLYLSLGIFLPLIVTNCIIIG, AAFDGLMMGLGFTLVLAVLGA, and PFLLAMLPPGAFIVMGLLIAL.

It belongs to the NqrDE/RnfAE family. As to quaternary structure, the complex is composed of six subunits: RnfA, RnfB, RnfC, RnfD, RnfE and RnfG.

It is found in the cell inner membrane. Its function is as follows. Part of a membrane-bound complex that couples electron transfer with translocation of ions across the membrane. The polypeptide is Ion-translocating oxidoreductase complex subunit E (Shewanella sp. (strain ANA-3)).